The primary structure comprises 156 residues: Arginine repressor (156 aa).

The protein belongs to the ArgR family.

It is found in the cytoplasm. The protein operates within amino-acid biosynthesis; L-arginine biosynthesis [regulation]. Functionally, regulates arginine biosynthesis genes. This is Arginine repressor from Shewanella sediminis (strain HAW-EB3).